A 297-amino-acid polypeptide reads, in one-letter code: Probable deoxyhypusine synthase (297 aa).

Lys265 serves as the catalytic Nucleophile.

Belongs to the deoxyhypusine synthase family. Requires NAD(+) as cofactor.

The enzyme catalyses [eIF5A protein]-L-lysine + spermidine = [eIF5A protein]-deoxyhypusine + propane-1,3-diamine. Its pathway is protein modification; eIF5A hypusination. Its function is as follows. Catalyzes the NAD-dependent oxidative cleavage of spermidine and the subsequent transfer of the butylamine moiety of spermidine to the epsilon-amino group of a specific lysine residue of the eIF-5A precursor protein to form the intermediate deoxyhypusine residue. In Methanopyrus kandleri (strain AV19 / DSM 6324 / JCM 9639 / NBRC 100938), this protein is Probable deoxyhypusine synthase.